Reading from the N-terminus, the 129-residue chain is Succinate dehydrogenase assembly factor 3, mitochondrial (129 aa).

The transit peptide at 1–21 (MQVNHLLRQAVKQTTRAGRLG) directs the protein to the mitochondrion.

The protein belongs to the complex I LYR family. SDHAF3 subfamily. As to quaternary structure, interacts with the iron-sulfur protein subunit within the SDH catalytic dimer.

The protein localises to the mitochondrion matrix. Its function is as follows. Plays an essential role in the assembly of succinate dehydrogenase (SDH), an enzyme complex (also referred to as respiratory complex II) that is a component of both the tricarboxylic acid (TCA) cycle and the mitochondrial electron transport chain, and which couples the oxidation of succinate to fumarate with the reduction of ubiquinone (coenzyme Q) to ubiquinol. Promotes maturation of the iron-sulfur protein subunit of the SDH catalytic dimer, protecting it from the deleterious effects of oxidants. May act together with SDHAF1. This is Succinate dehydrogenase assembly factor 3, mitochondrial from Kluyveromyces lactis (strain ATCC 8585 / CBS 2359 / DSM 70799 / NBRC 1267 / NRRL Y-1140 / WM37) (Yeast).